Consider the following 560-residue polypeptide: Potassium-transporting ATPase potassium-binding subunit (560 aa).

Helical transmembrane passes span 6-26, 63-83, 132-152, 175-195, 250-270, 282-302, 327-347, 356-376, 379-399, 416-436, 483-503, and 524-544; these read FLLI…LGSL, LLAI…ILMC, GLAV…FALI, LWVL…QGAI, LTNV…CFAF, AILW…MWAE, FGIL…CGAV, ALGG…FGGV, GLYG…LMIG, MTAL…ALAM, LLLA…VMAI, and GALF…LTFI.

This sequence belongs to the KdpA family. As to quaternary structure, the system is composed of three essential subunits: KdpA, KdpB and KdpC.

The protein resides in the cell inner membrane. Its function is as follows. Part of the high-affinity ATP-driven potassium transport (or Kdp) system, which catalyzes the hydrolysis of ATP coupled with the electrogenic transport of potassium into the cytoplasm. This subunit binds the periplasmic potassium ions and delivers the ions to the membrane domain of KdpB through an intramembrane tunnel. This is Potassium-transporting ATPase potassium-binding subunit from Cronobacter sakazakii (strain ATCC BAA-894) (Enterobacter sakazakii).